We begin with the raw amino-acid sequence, 158 residues long: Small ribosomal subunit protein uS15 (158 aa).

Residues 1–18 show a composition bias toward basic residues; that stretch reads MARMHARKRGKSGSKRPP. The interval 1–21 is disordered; it reads MARMHARKRGKSGSKRPPRTA.

The protein belongs to the universal ribosomal protein uS15 family. In terms of assembly, part of the 30S ribosomal subunit.

The chain is Small ribosomal subunit protein uS15 from Pyrococcus horikoshii (strain ATCC 700860 / DSM 12428 / JCM 9974 / NBRC 100139 / OT-3).